Reading from the N-terminus, the 450-residue chain is V-type proton ATPase subunit H (450 aa).

Belongs to the V-ATPase H subunit family. As to quaternary structure, V-ATPase is a heteromultimeric enzyme composed of a peripheral catalytic V1 complex (components A to H) attached to an integral membrane V0 proton pore complex (components: a, c, c', c'', d, e, f and VOA1).

The protein localises to the vacuole membrane. Its function is as follows. Subunit of the V1 complex of vacuolar(H+)-ATPase (V-ATPase), a multisubunit enzyme composed of a peripheral complex (V1) that hydrolyzes ATP and a membrane integral complex (V0) that translocates protons. V-ATPase is responsible for acidifying and maintaining the pH of intracellular compartments. This subunit is essential for activity, but not assembly, of the enzyme complex. This subunit is also required for silencing the ATPase activity of V-ATPase when V1 is detached from V0. The polypeptide is V-type proton ATPase subunit H (vma13) (Schizosaccharomyces pombe (strain 972 / ATCC 24843) (Fission yeast)).